We begin with the raw amino-acid sequence, 139 residues long: Ubiquitin-conjugating enzyme spm2 (139 aa).

In terms of domain architecture, UBC core spans 5-139; that stretch reads PRNFKLLEEL…PQPPEGSTFF (135 aa).

It belongs to the ubiquitin-conjugating enzyme family. Heterodimer with ubc13.

Functionally, has a role in the DNA error-free postreplication repair (PRR) pathway. Lacks catalytic activity by itself. The ubc13/spm2 heterodimer catalyzes the synthesis of non-canonical poly-ubiquitin chains that are linked through 'Lys-63'. In Schizosaccharomyces pombe (strain 972 / ATCC 24843) (Fission yeast), this protein is Ubiquitin-conjugating enzyme spm2 (spm2).